The chain runs to 456 residues: Non-structural protein V (456 aa).

Residues 53–92 form a disordered region; that stretch reads SGESEQVEGGMSKDDGDVERRNLEDLSSTSPTDGTIGKRV. Positions 63–76 are enriched in basic and acidic residues; it reads MSKDDGDVERRNLE. Ser257 carries the phosphoserine; by host modification. The disordered stretch occupies residues 265–324; it reads ISPEDEEPSSVGGKPNESIGRTIEGQSIRDNLQAKDNKSTDVPGAGPKDSAVKEEPPQKR. A Phosphoserine; by host modification is found at Ser350. Zn(2+) contacts are provided by His408, Cys427, Cys431, Cys443, Cys445, Cys448, Cys452, and Cys455.

Belongs to the paramyxoviruses V protein family. As to quaternary structure, interacts with host IFIH1/MDA5, DHX58/LGP2, STAT1 and STAT2. Interacts (via N-terminus) with host UBXN1 (via C-terminal UBX domain); this interaction inhibits interferon-alpha/beta (IFN-alpha/beta) production. Interacts with host RIGI regulatory protein (via CARDs domain) and host TRIM25 (via SPRY domain); these interactions prevent TRIM25-mediated ubiquitination of RIG-I and disrupts downstream RIG-I signaling.

The protein localises to the host cytoplasm. Its function is as follows. Plays an essential role in the inhibition of host immune response. Prevents the establishment of cellular antiviral state by blocking interferon-alpha/beta (IFN-alpha/beta) production and signaling pathway. Interacts with host IFIH1/MDA5 and DHX58/LGP2 to inhibit the transduction pathway involved in the activation of IFN-beta promoter, thus protecting the virus against cell antiviral state. Blocks the type I interferon signaling pathway by interacting with host STAT1 and STAT2 and thereby inhibiting their phosphorylation and subsequent nuclear translocation. Efficiently blocks the type II interferon signaling pathway. Suppresses interferon induction by interacting with and stabilizing host UBXN1, a negative regulator of both RIG-I-like receptors (RLR) and NF-kappa-B pathways. Blocks the type I interferon signaling pathway by disrupting the RIG-I signaling pathway. The polypeptide is Non-structural protein V (P/V/C) (Cynopterus brachyotis (Lesser short-nosed fruit bat)).